We begin with the raw amino-acid sequence, 163 residues long: Large ribosomal subunit protein uL10 (163 aa).

It belongs to the universal ribosomal protein uL10 family. In terms of assembly, part of the ribosomal stalk of the 50S ribosomal subunit. The N-terminus interacts with L11 and the large rRNA to form the base of the stalk. The C-terminus forms an elongated spine to which L12 dimers bind in a sequential fashion forming a multimeric L10(L12)X complex.

Functionally, forms part of the ribosomal stalk, playing a central role in the interaction of the ribosome with GTP-bound translation factors. The sequence is that of Large ribosomal subunit protein uL10 from Haemophilus influenzae (strain 86-028NP).